A 91-amino-acid polypeptide reads, in one-letter code: Putative defensin-like protein 145 (91 aa).

An N-terminal signal peptide occupies residues 1 to 26 (MNKNIIFSFTVLTLFVIFVQVTGVIG). N-linked (GlcNAc...) asparagine glycans are attached at residues N35 and N68. 4 disulfide bridges follow: C39-C84, C52-C74, C57-C78, and C61-C80.

The protein belongs to the DEFL family.

The protein localises to the secreted. The polypeptide is Putative defensin-like protein 145 (LCR2) (Arabidopsis thaliana (Mouse-ear cress)).